The following is a 325-amino-acid chain: Glycine--tRNA ligase alpha subunit (325 aa).

Belongs to the class-II aminoacyl-tRNA synthetase family. Tetramer of two alpha and two beta subunits.

It localises to the cytoplasm. It catalyses the reaction tRNA(Gly) + glycine + ATP = glycyl-tRNA(Gly) + AMP + diphosphate. The protein is Glycine--tRNA ligase alpha subunit of Ralstonia nicotianae (strain ATCC BAA-1114 / GMI1000) (Ralstonia solanacearum).